The primary structure comprises 276 residues: 4-deoxy-L-threo-5-hexosulose-uronate ketol-isomerase 2 (276 aa).

The Zn(2+) site is built by His194, His196, Glu201, and His243.

This sequence belongs to the KduI family. The cofactor is Zn(2+).

The catalysed reaction is 5-dehydro-4-deoxy-D-glucuronate = 3-deoxy-D-glycero-2,5-hexodiulosonate. Its pathway is glycan metabolism; pectin degradation; 2-dehydro-3-deoxy-D-gluconate from pectin: step 4/5. Its function is as follows. Catalyzes the isomerization of 5-dehydro-4-deoxy-D-glucuronate to 3-deoxy-D-glycero-2,5-hexodiulosonate. The polypeptide is 4-deoxy-L-threo-5-hexosulose-uronate ketol-isomerase 2 (kduI2) (Enterococcus faecalis (strain ATCC 700802 / V583)).